A 719-amino-acid chain; its full sequence is Alpha-galactosidase 2 (719 aa).

Residue aspartate 472 is the Nucleophile of the active site. Catalysis depends on aspartate 542, which acts as the Proton donor.

It belongs to the glycosyl hydrolase 36 family.

It catalyses the reaction Hydrolysis of terminal, non-reducing alpha-D-galactose residues in alpha-D-galactosides, including galactose oligosaccharides, galactomannans and galactolipids.. Its function is as follows. Alpha-galactosidase associated with the sucrase operon. The sequence is that of Alpha-galactosidase 2 (agaS) from Pediococcus pentosaceus.